A 138-amino-acid chain; its full sequence is Large ribosomal subunit protein uL16 (138 aa).

This sequence belongs to the universal ribosomal protein uL16 family. Part of the 50S ribosomal subunit.

Its function is as follows. Binds 23S rRNA and is also seen to make contacts with the A and possibly P site tRNAs. This chain is Large ribosomal subunit protein uL16, found in Nitrosomonas europaea (strain ATCC 19718 / CIP 103999 / KCTC 2705 / NBRC 14298).